The following is a 661-amino-acid chain: Sorting nexin-4 (661 aa).

Polar residues-rich tracts occupy residues 1-10 (MSDQFTSIQW) and 26-36 (HSQVQINSSIN). Disordered regions lie at residues 1-49 (MSDQ…QEQD) and 56-75 (TVVR…IPPR). Positions 38–49 (IEEDQGQEQEQD) are enriched in acidic residues. The segment covering 56–70 (TVVRGGNDSDSNPNE) has biased composition (polar residues). The 122-residue stretch at 77–198 (VYIRSKVSQP…HIFLEDSVNW (122 aa)) folds into the PX domain. R120, S122, K146, and R165 together coordinate a 1,2-diacyl-sn-glycero-3-phospho-(1D-myo-inositol-3-phosphate). A compositionally biased stretch (basic and acidic residues) spans 554 to 572 (LRSIKSQERKNEQVHKQDQ). Positions 554-661 (LRSIKSQERK…LVDVEGLEQW (108 aa)) are disordered. A compositionally biased stretch (polar residues) spans 624–640 (ASQTESHTQSEPQNDNQ). Positions 645 to 661 (DDGSDEGLVDVEGLEQW) are enriched in acidic residues.

The protein belongs to the sorting nexin family.

Its subcellular location is the cytoplasm. It localises to the membrane. The protein resides in the vacuole membrane. Functionally, sorting nexin involved in the separation or division of vacuoles throughout the entire life cycle of the cells. Required for glucose-induced micropexophagy and ethanol-induced macropexophagy. Involved in the fusion between the pexophagosome and the vacuole. Also involved in the separation or division of vacuoles throughout the entire life cycle of the cells. This chain is Sorting nexin-4 (SNX4), found in Komagataella pastoris (Yeast).